A 460-amino-acid polypeptide reads, in one-letter code: MSLTAVETAAGTSQRLNAMPQTMPEAMPHPHATTIMKWAPDTHYPPQGPVHSYYDQHLYSPTGQLIVGPDHRRPSQLQQHQHPRTGHGYQLNGMPGSVPQNQPHPPHSHPQSGLYATDHTAGQQAGPPQAPSAILQRNSEMLDHAQGRHPVYAPRSHSVSEDQPPTSVHGQHRPSIDMCAVPPFTEYHFNPPVTTNGRPPDSNSPMVSPTGLRPDPMRIADILTTGERSRSRTSVDNRLSDNRFNLQIRQQPVAARSCGFGERDRRVIDPPPIVQLLIKDDSLTKEEIAKHLRYPHYVMSCSIFDESGSCDASFMPEEYRQQRRLMGLLVSAPFVGKDEHGEEGCFFCFPDLSCRTPGSFRLHFTLVKIDPIRAKEVKRFPTLVTAQSEVFTVYTAKDFPGMQASTKLTKRLKEQGCIISIKKGNDRSKNTRSHDDSSDGEQDEGEATLQGKRRRRSARQ.

Disordered regions lie at residues 67–131 (VGPD…PQAP), 152–216 (YAPR…RPDP), and 422–460 (KKGN…SARQ). The span at 192 to 207 (PVTTNGRPPDSNSPMV) shows a compositional bias: polar residues. Residues 239–422 (LSDNRFNLQI…KEQGCIISIK (184 aa)) enclose the Velvet domain. A compositionally biased stretch (basic and acidic residues) spans 423-437 (KGNDRSKNTRSHDDS). The segment covering 451 to 460 (GKRRRRSARQ) has biased composition (basic residues).

This sequence belongs to the velvet family. VelC subfamily. In terms of assembly, interacts with VE1.

The protein localises to the nucleus. Functionally, velvet-domain-containing protein that acts as a positive regulator of sexual development. Dispensable for regulation of conidial size, hyphal hydrophobicity, fumonisin production, and oxidant resistance. The polypeptide is Sexual development regulator velC (Gibberella moniliformis (strain M3125 / FGSC 7600) (Maize ear and stalk rot fungus)).